A 449-amino-acid chain; its full sequence is METLASLYNEHLSTLQQRTRDVLERHQLDALLIHSGELQRIFLDDRDYPFKVNAQFKAWVPVTQVPNCWLWVDGVNTPKLWFYSPVDYWHCVEPLPDSFWTKAIDIQPLVNANDIAQLLPVQRERVAYIGYAQQRAQALGFSAENINPKPVLDYLHFYRSYKTDYELACMREAQKTAVAGHNAAHEAFLSGMSEFDINLAYLMATGQRDTDVPYDNIVALNEHSAVLHYTTLQHQPPAEIRSFLIDAGAEYNGYAADLTRTYVAGSKNTADSKNDFAALIKDLNNEQLGLIKTLKCGVNYTEYNVQMHQRIAKLLRTHNLVTGISEEAMVEQGITCPFLPHGLGHPLGLQVHDTAGFMQDDKGAHLSAPSKYPYLRCTRILQPRMVLTIEPGLYFIESLLAPWRSGEFSQHFNWDLIETLKPYGGIRIEDNIVIHENRVENMTRDLKLA.

D246, D257, H345, E390, and E429 together coordinate Mn(2+).

The protein belongs to the peptidase M24B family. Bacterial-type prolidase subfamily. Mn(2+) is required as a cofactor.

The catalysed reaction is Xaa-L-Pro dipeptide + H2O = an L-alpha-amino acid + L-proline. Functionally, splits dipeptides with a prolyl residue in the C-terminal position. This Yersinia enterocolitica serotype O:8 / biotype 1B (strain NCTC 13174 / 8081) protein is Xaa-Pro dipeptidase.